The sequence spans 255 residues: F-box/SPRY domain-containing protein 1 (255 aa).

The F-box domain occupies 3-51; the sequence is DPVAALCNYNVLEVIFSYLELDDLSHCSQVCKSWYHFLNDENSDVWRWH. The 193-residue stretch at 61–253 folds into the B30.2/SPRY domain; it reads LKSDLLSSVP…VSMVYLGTPL (193 aa).

It belongs to the FBXO45/Fsn family. As to quaternary structure, component of an E3 ubiquitin ligase complex composed of hiw and Fsn.

The protein resides in the synapse. The protein operates within protein modification; protein ubiquitination. In terms of biological role, required in the presynaptic motoneuron to down-regulate the levels of wnd and restrain synaptic terminal growth at the neuromuscular junction (NMJ). The protein is F-box/SPRY domain-containing protein 1 of Drosophila sechellia (Fruit fly).